The chain runs to 293 residues: Ribosomal protein L11 methyltransferase (293 aa).

The S-adenosyl-L-methionine site is built by Thr-145, Gly-166, Asp-188, and Asn-230.

It belongs to the methyltransferase superfamily. PrmA family.

Its subcellular location is the cytoplasm. The catalysed reaction is L-lysyl-[protein] + 3 S-adenosyl-L-methionine = N(6),N(6),N(6)-trimethyl-L-lysyl-[protein] + 3 S-adenosyl-L-homocysteine + 3 H(+). Functionally, methylates ribosomal protein L11. In Edwardsiella ictaluri (strain 93-146), this protein is Ribosomal protein L11 methyltransferase.